A 194-amino-acid polypeptide reads, in one-letter code: dITP/XTP pyrophosphatase (194 aa).

8 to 13 (TSNPGK) is a substrate binding site. The Mg(2+) site is built by Glu38 and Asp67. Asp67 (proton acceptor) is an active-site residue. Residues Ser68, 152-155 (FGYD), Lys175, and 180-181 (HR) each bind substrate.

The protein belongs to the HAM1 NTPase family. Homodimer. Mg(2+) is required as a cofactor.

It catalyses the reaction XTP + H2O = XMP + diphosphate + H(+). The catalysed reaction is dITP + H2O = dIMP + diphosphate + H(+). The enzyme catalyses ITP + H2O = IMP + diphosphate + H(+). In terms of biological role, pyrophosphatase that catalyzes the hydrolysis of nucleoside triphosphates to their monophosphate derivatives, with a high preference for the non-canonical purine nucleotides XTP (xanthosine triphosphate), dITP (deoxyinosine triphosphate) and ITP. Seems to function as a house-cleaning enzyme that removes non-canonical purine nucleotides from the nucleotide pool, thus preventing their incorporation into DNA/RNA and avoiding chromosomal lesions. The protein is dITP/XTP pyrophosphatase of Legionella pneumophila (strain Lens).